The chain runs to 101 residues: Small ribosomal subunit protein uS14 (101 aa).

This sequence belongs to the universal ribosomal protein uS14 family. As to quaternary structure, part of the 30S ribosomal subunit. Contacts proteins S3 and S10.

Functionally, binds 16S rRNA, required for the assembly of 30S particles and may also be responsible for determining the conformation of the 16S rRNA at the A site. This chain is Small ribosomal subunit protein uS14, found in Proteus mirabilis (strain HI4320).